The following is an 80-amino-acid chain: Large ribosomal subunit protein bL31B (80 aa).

This sequence belongs to the bacterial ribosomal protein bL31 family. Type B subfamily. In terms of assembly, part of the 50S ribosomal subunit.

The chain is Large ribosomal subunit protein bL31B from Xylella fastidiosa (strain 9a5c).